We begin with the raw amino-acid sequence, 217 residues long: UPF0502 protein VIBHAR_05349 (217 aa).

The protein belongs to the UPF0502 family.

This is UPF0502 protein VIBHAR_05349 from Vibrio campbellii (strain ATCC BAA-1116).